A 278-amino-acid polypeptide reads, in one-letter code: Tyrosine-protein phosphatase pmp1 (278 aa).

The 155-residue stretch at glycine 60–lysine 214 folds into the Tyrosine-protein phosphatase domain. Cysteine 158 (phosphocysteine intermediate) is an active-site residue. A disordered region spans residues serine 217 to serine 278. Polar residues predominate over residues serine 252–serine 278.

This sequence belongs to the protein-tyrosine phosphatase family. Non-receptor class dual specificity subfamily.

The catalysed reaction is O-phospho-L-tyrosyl-[protein] + H2O = L-tyrosyl-[protein] + phosphate. Its function is as follows. Dual specificity phosphatase that dephosphorylates MAP kinase pmk1 on a Tyr. Has a role in chloride ion homeostasis by inactivating this pmk1 MAP kinase pathway. In Schizosaccharomyces pombe (strain 972 / ATCC 24843) (Fission yeast), this protein is Tyrosine-protein phosphatase pmp1 (pmp1).